The primary structure comprises 418 residues: Staphyloferrin B transporter (418 aa).

Helical transmembrane passes span 19–39 (FIAIAGLTVLVPLLPIYMASL), 49–69 (LWSGIAIAAPAVTTMIASPIW), 88–108 (GLAVCLFLMALCTTPLQFVLV), 163–183 (ILGFSALLMSIAVITFIVCIF), 222–242 (FIIVGVLANFAMYGMLTALSP), 257–277 (VIGFLQSAFWTASILSAPLWG), 287–307 (SVYIFATIACGCSAILQGLAT), 317–337 (ILQGLTYSALIQSVMFVVVNA), 353–373 (MLVVGQIIGSLSGAAITSYTT), and 377–397 (TFIVMGVVFAVSSLFLICSTI).

It belongs to the major facilitator superfamily.

Its subcellular location is the cell membrane. Functionally, involved in staphyloferrin B secretion. The chain is Staphyloferrin B transporter from Staphylococcus aureus (strain NCTC 8325 / PS 47).